The primary structure comprises 302 residues: Protein FdhE homolog (302 aa).

The protein belongs to the FdhE family.

It is found in the cytoplasm. Necessary for formate dehydrogenase activity. The chain is Protein FdhE homolog from Haemophilus influenzae (strain PittEE).